The primary structure comprises 406 residues: Argininosuccinate synthase (406 aa).

Residue 9–17 (AYSGGLDTS) coordinates ATP. An L-citrulline-binding site is contributed by Tyr-86. Gly-116 contacts ATP. Residues Thr-118, Asn-122, and Asp-123 each contribute to the L-aspartate site. Asn-122 serves as a coordination point for L-citrulline. The L-citrulline site is built by Arg-126, Ser-174, Ser-183, Glu-259, and Tyr-271.

The protein belongs to the argininosuccinate synthase family. Type 1 subfamily. As to quaternary structure, homotetramer.

It is found in the cytoplasm. The enzyme catalyses L-citrulline + L-aspartate + ATP = 2-(N(omega)-L-arginino)succinate + AMP + diphosphate + H(+). It functions in the pathway amino-acid biosynthesis; L-arginine biosynthesis; L-arginine from L-ornithine and carbamoyl phosphate: step 2/3. This chain is Argininosuccinate synthase, found in Geobacillus kaustophilus (strain HTA426).